Consider the following 340-residue polypeptide: Ketol-acid reductoisomerase (NADP(+)) (340 aa).

The region spanning 3-182 (VQMEYEKDVK…GAARVGLLET (180 aa)) is the KARI N-terminal Rossmann domain. Residues 26 to 29 (YGSQ), R49, S53, and 83 to 86 (DEIQ) each bind NADP(+). The active site involves H108. Position 134 (G134) interacts with NADP(+). A KARI C-terminal knotted domain is found at 183–328 (TYKEETEEDL…AELRKAMPFV (146 aa)). Mg(2+) is bound by residues D191, E195, E227, and E231. S252 provides a ligand contact to substrate.

It belongs to the ketol-acid reductoisomerase family. The cofactor is Mg(2+).

The enzyme catalyses (2R)-2,3-dihydroxy-3-methylbutanoate + NADP(+) = (2S)-2-acetolactate + NADPH + H(+). It carries out the reaction (2R,3R)-2,3-dihydroxy-3-methylpentanoate + NADP(+) = (S)-2-ethyl-2-hydroxy-3-oxobutanoate + NADPH + H(+). It participates in amino-acid biosynthesis; L-isoleucine biosynthesis; L-isoleucine from 2-oxobutanoate: step 2/4. It functions in the pathway amino-acid biosynthesis; L-valine biosynthesis; L-valine from pyruvate: step 2/4. In terms of biological role, involved in the biosynthesis of branched-chain amino acids (BCAA). Catalyzes an alkyl-migration followed by a ketol-acid reduction of (S)-2-acetolactate (S2AL) to yield (R)-2,3-dihydroxy-isovalerate. In the isomerase reaction, S2AL is rearranged via a Mg-dependent methyl migration to produce 3-hydroxy-3-methyl-2-ketobutyrate (HMKB). In the reductase reaction, this 2-ketoacid undergoes a metal-dependent reduction by NADPH to yield (R)-2,3-dihydroxy-isovalerate. This chain is Ketol-acid reductoisomerase (NADP(+)), found in Streptococcus thermophilus (strain CNRZ 1066).